The sequence spans 352 residues: Non-disjunction protein 1 (352 aa).

Interacts with MPS3.

The protein resides in the nucleus. Its subcellular location is the chromosome. The protein localises to the telomere. Functionally, required for telomeric clustering (bouquet stage) during meiosis 1 prophase, formation and efficient homolog pairing, meiosis 1 disjunction, and telomere deletion during meiosis. Also promotes meiotic recombination. The sequence is that of Non-disjunction protein 1 (NDJ1) from Saccharomyces cerevisiae (strain ATCC 204508 / S288c) (Baker's yeast).